Reading from the N-terminus, the 44-residue chain is Photosystem I reaction center subunit IX (44 aa).

A helical membrane pass occupies residues Phe9–Ile29.

The protein belongs to the PsaJ family.

Its subcellular location is the cellular thylakoid membrane. Functionally, may help in the organization of the PsaE and PsaF subunits. In Prochlorococcus marinus subsp. pastoris (strain CCMP1986 / NIES-2087 / MED4), this protein is Photosystem I reaction center subunit IX.